The chain runs to 401 residues: Lipoyl synthase 1, mitochondrial (401 aa).

A mitochondrion-targeting transit peptide spans 1-25; that stretch reads MWSSSSSLCRNPSFRRAWLSTVTVT. Residues 49–79 form a disordered region; sequence IDDFSSTNAPTTTTHYTSSNGSPIVRQKAAP. The segment covering 51-70 has biased composition (polar residues); it reads DFSSTNAPTTTTHYTSSNGS. 7 residues coordinate [4Fe-4S] cluster: Cys117, Cys122, Cys128, Cys148, Cys152, Cys155, and Ser376. One can recognise a Radical SAM core domain in the interval 133 to 365; sequence EDQTATATIM…QETAMGMGFA (233 aa).

This sequence belongs to the radical SAM superfamily. Lipoyl synthase family. [4Fe-4S] cluster serves as cofactor.

Its subcellular location is the mitochondrion. It catalyses the reaction [[Fe-S] cluster scaffold protein carrying a second [4Fe-4S](2+) cluster] + N(6)-octanoyl-L-lysyl-[protein] + 2 oxidized [2Fe-2S]-[ferredoxin] + 2 S-adenosyl-L-methionine + 4 H(+) = [[Fe-S] cluster scaffold protein] + N(6)-[(R)-dihydrolipoyl]-L-lysyl-[protein] + 4 Fe(3+) + 2 hydrogen sulfide + 2 5'-deoxyadenosine + 2 L-methionine + 2 reduced [2Fe-2S]-[ferredoxin]. The protein operates within protein modification; protein lipoylation via endogenous pathway; protein N(6)-(lipoyl)lysine from octanoyl-[acyl-carrier-protein]: step 2/2. Catalyzes the radical-mediated insertion of two sulfur atoms into the C-6 and C-8 positions of the octanoyl moiety bound to the lipoyl domains of lipoate-dependent enzymes, thereby converting the octanoylated domains into lipoylated derivatives. This Phaeodactylum tricornutum (strain CCAP 1055/1) protein is Lipoyl synthase 1, mitochondrial.